A 166-amino-acid chain; its full sequence is MQCPHCHHNGSRVVDSRPTDDGRVIRRRRECESCGFRFTTFERVEVTPLLVIKKNGTREEFNREKVLRGIIRSAEKRPVGMDVMTQIVDEVENKIRALGVSEISSQLIGEYVMNRLVDVDEIAYIRFASVYRQFKDTGVFFNELKDMLDKDKLKAKKETNGKSEAK.

A zinc finger lies at 3–34; sequence CPHCHHNGSRVVDSRPTDDGRVIRRRRECESC. Residues 49–139 form the ATP-cone domain; the sequence is LLVIKKNGTR…VYRQFKDTGV (91 aa).

It belongs to the NrdR family. Zn(2+) is required as a cofactor.

Negatively regulates transcription of bacterial ribonucleotide reductase nrd genes and operons by binding to NrdR-boxes. The protein is Transcriptional repressor NrdR of Levilactobacillus brevis (strain ATCC 367 / BCRC 12310 / CIP 105137 / JCM 1170 / LMG 11437 / NCIMB 947 / NCTC 947) (Lactobacillus brevis).